Reading from the N-terminus, the 173-residue chain is Protein FAM180A (173 aa).

An N-terminal signal peptide occupies residues 1 to 17 (MSWKALTILLVFSSTQA).

Belongs to the FAM180 family.

It localises to the secreted. The chain is Protein FAM180A (Fam180a) from Mus musculus (Mouse).